A 586-amino-acid chain; its full sequence is Aspartate--tRNA(Asp/Asn) ligase (586 aa).

Position 175 (Glu175) interacts with L-aspartate. Residues 199–202 form an aspartate region; it reads QIFK. Arg221 lines the L-aspartate pocket. ATP is bound by residues 221 to 223 and Gln230; that span reads RDE. His448 provides a ligand contact to L-aspartate. Position 482 (Glu482) interacts with ATP. An L-aspartate-binding site is contributed by Arg489. Position 534–537 (534–537) interacts with ATP; sequence GVDR.

This sequence belongs to the class-II aminoacyl-tRNA synthetase family. Type 1 subfamily. As to quaternary structure, homodimer.

The protein localises to the cytoplasm. The catalysed reaction is tRNA(Asx) + L-aspartate + ATP = L-aspartyl-tRNA(Asx) + AMP + diphosphate. In terms of biological role, aspartyl-tRNA synthetase with relaxed tRNA specificity since it is able to aspartylate not only its cognate tRNA(Asp) but also tRNA(Asn). Reaction proceeds in two steps: L-aspartate is first activated by ATP to form Asp-AMP and then transferred to the acceptor end of tRNA(Asp/Asn). This chain is Aspartate--tRNA(Asp/Asn) ligase, found in Syntrophomonas wolfei subsp. wolfei (strain DSM 2245B / Goettingen).